The primary structure comprises 288 residues: Bifunctional protein FolD 2 (288 aa).

NADP(+) is bound by residues G166 to S168 and S191.

This sequence belongs to the tetrahydrofolate dehydrogenase/cyclohydrolase family. In terms of assembly, homodimer.

It carries out the reaction (6R)-5,10-methylene-5,6,7,8-tetrahydrofolate + NADP(+) = (6R)-5,10-methenyltetrahydrofolate + NADPH. The enzyme catalyses (6R)-5,10-methenyltetrahydrofolate + H2O = (6R)-10-formyltetrahydrofolate + H(+). It functions in the pathway one-carbon metabolism; tetrahydrofolate interconversion. In terms of biological role, catalyzes the oxidation of 5,10-methylenetetrahydrofolate to 5,10-methenyltetrahydrofolate and then the hydrolysis of 5,10-methenyltetrahydrofolate to 10-formyltetrahydrofolate. This chain is Bifunctional protein FolD 2, found in Myxococcus xanthus (strain DK1622).